Consider the following 312-residue polypeptide: 4-hydroxyphenylacetate decarboxylase activating enzyme (312 aa).

The 284-residue stretch at 16 to 299 folds into the Radical SAM core domain; it reads HDGPGCRTSV…MEHLQQLYLD (284 aa). [4Fe-4S] cluster contacts are provided by cysteine 30, cysteine 34, cysteine 37, cysteine 56, cysteine 62, cysteine 65, and cysteine 101. 36-38 contacts S-adenosyl-L-methionine; the sequence is WCA. 4Fe-4S ferredoxin-type domains are found at residues 47–79 and 80–112; these read KHIMVAENVCKWKNGCRSCINACSHDSIKFSED and GKLKISWDTCEKCETFDCVNMCPNNALKQCVKE. S-adenosyl-L-methionine contacts are provided by residues glycine 140, 189–191, and histidine 263; that span reads DVK.

Belongs to the organic radical-activating enzymes family. Monomer. It depends on [4Fe-4S] cluster as a cofactor.

The enzyme catalyses glycyl-[protein] + reduced [flavodoxin] + S-adenosyl-L-methionine = glycin-2-yl radical-[protein] + semiquinone [flavodoxin] + 5'-deoxyadenosine + L-methionine + H(+). Its function is as follows. Catalyzes activation of 4-hydroxyphenylacetate decarboxylase under anaerobic conditions by generation of an organic free radical on a glycine residue, via a homolytic cleavage of S-adenosyl-L-methionine (SAM). The protein is 4-hydroxyphenylacetate decarboxylase activating enzyme of Clostridium scatologenes.